The chain runs to 282 residues: MELKFSCRGNVIALSFNENDTVLDAKEKLGQEIDVSPSLIKLLYKGNLSDDSHLQDVVKNESKIMCLIRQDKDIVNQAISQLKVPDYSTNTYSLKPKKPHTTPKPASIYTFNELVVLDYPHKDRALRYLERLRDDTGIKKIMDSHRWTVPLLSEMDPAEHTRHDSKTLGLNHNQGAHIELRLRTDRYDGFRDYKTVKSTLIHELTHNVHGEHDSSFWELFRQLTKEADAADLLGKPGSYVSDRASYTPQQDNDDEDQKNHRRDLLLAAAERRKQSGSKVQKE.

The Ubiquitin-like domain maps to methionine 1–valine 75. The region spanning proline 99 to glutamine 274 is the WLM domain. Residue histidine 202 participates in Zn(2+) binding. The active site involves glutamate 203. Residues histidine 206 and histidine 212 each coordinate Zn(2+). The tract at residues glycine 234–glutamate 282 is disordered. Over residues alanine 269–glutamate 282 the composition is skewed to basic and acidic residues.

Belongs to the peptidase M3 family. WSS1-like metalloprotease (WLM) subfamily. It depends on Zn(2+) as a cofactor.

The protein localises to the cytoplasm. It is found in the nucleus. In terms of biological role, metalloendopeptidase that acts selectively on DNA-binding proteins. DNA is needed to bring the protease and substrates together to enable proteolysis. Involved in the repair of toxic DNA-protein cross-links (DPCs) such as covalently trapped topoisomerase 1 (TOP1) adducts on DNA lesions or DPCs induced by reactive compounds such as formaldehyde. The polypeptide is DNA-dependent metalloprotease WSS1 homolog 2 (Schizosaccharomyces pombe (strain 972 / ATCC 24843) (Fission yeast)).